The primary structure comprises 205 residues: Small ribosomal subunit protein uS4 (205 aa).

A disordered region spans residues 18 to 46 (NIWGRPKSPVNRREYGPGQHGQRRKGKLS). An S4 RNA-binding domain is found at 94–157 (RRLDTVVYRA…KQLTFVLEAN (64 aa)).

Belongs to the universal ribosomal protein uS4 family. As to quaternary structure, part of the 30S ribosomal subunit. Contacts protein S5. The interaction surface between S4 and S5 is involved in control of translational fidelity.

Functionally, one of the primary rRNA binding proteins, it binds directly to 16S rRNA where it nucleates assembly of the body of the 30S subunit. With S5 and S12 plays an important role in translational accuracy. This is Small ribosomal subunit protein uS4 from Rhodopseudomonas palustris (strain BisB18).